We begin with the raw amino-acid sequence, 300 residues long: Probable membrane transporter protein YtnM (300 aa).

Transmembrane regions (helical) follow at residues 4 to 24 (LIVF…LGMA), 33 to 53 (LLAF…AEVV), 76 to 96 (LVIP…QLPG), 102 to 122 (YISL…LFQY), 139 to 159 (IPLG…WGPV), 206 to 226 (LWVF…AWLV), 231 to 251 (PQLM…RTLI), and 260 to 280 (VHPL…LFVL).

This sequence belongs to the 4-toluene sulfonate uptake permease (TSUP) (TC 2.A.102) family.

Its subcellular location is the cell membrane. The polypeptide is Probable membrane transporter protein YtnM (ytnM) (Bacillus subtilis (strain 168)).